A 291-amino-acid chain; its full sequence is Protease HtpX (291 aa).

Transmembrane regions (helical) follow at residues 4–24 (IVIF…LLTC) and 37–57 (IISG…SKFI). His139 is a binding site for Zn(2+). Glu140 is an active-site residue. His143 provides a ligand contact to Zn(2+). The next 2 membrane-spanning stretches (helical) occupy residues 147–167 (GDMV…IFIS) and 195–215 (IVST…VLWF). Glu220 contributes to the Zn(2+) binding site.

This sequence belongs to the peptidase M48B family. Zn(2+) serves as cofactor.

It localises to the cell membrane. The protein is Protease HtpX of Baumannia cicadellinicola subsp. Homalodisca coagulata.